The following is a 116-amino-acid chain: Large ribosomal subunit protein bL17 (116 aa).

The protein belongs to the bacterial ribosomal protein bL17 family. In terms of assembly, part of the 50S ribosomal subunit. Contacts protein L32.

The protein is Large ribosomal subunit protein bL17 of Prochlorococcus marinus subsp. pastoris (strain CCMP1986 / NIES-2087 / MED4).